The primary structure comprises 81 residues: Photosystem I iron-sulfur center (81 aa).

2 4Fe-4S ferredoxin-type domains span residues 2–31 (SHSVKIYNTCIGCTQCVRACPTDVLEMVPW) and 37–68 (GQIASSPRTEDCVGCKRCESACPTDFLSVRVY). Residues Cys-11, Cys-14, Cys-17, Cys-21, Cys-48, Cys-51, Cys-54, and Cys-58 each contribute to the [4Fe-4S] cluster site.

As to quaternary structure, the eukaryotic PSI reaction center is composed of at least 11 subunits. [4Fe-4S] cluster is required as a cofactor.

Its subcellular location is the plastid. It is found in the chloroplast thylakoid membrane. The catalysed reaction is reduced [plastocyanin] + hnu + oxidized [2Fe-2S]-[ferredoxin] = oxidized [plastocyanin] + reduced [2Fe-2S]-[ferredoxin]. Apoprotein for the two 4Fe-4S centers FA and FB of photosystem I (PSI); essential for photochemical activity. FB is the terminal electron acceptor of PSI, donating electrons to ferredoxin. The C-terminus interacts with PsaA/B/D and helps assemble the protein into the PSI complex. Required for binding of PsaD and PsaE to PSI. PSI is a plastocyanin/cytochrome c6-ferredoxin oxidoreductase, converting photonic excitation into a charge separation, which transfers an electron from the donor P700 chlorophyll pair to the spectroscopically characterized acceptors A0, A1, FX, FA and FB in turn. The chain is Photosystem I iron-sulfur center from Euglena gracilis.